Reading from the N-terminus, the 394-residue chain is Zinc finger and SCAN domain-containing protein 9 (394 aa).

Lysine 26 is covalently cross-linked (Glycyl lysine isopeptide (Lys-Gly) (interchain with G-Cter in SUMO2)). Positions 52-134 (RRHFRQLCYQ…ILLEDLEREL (83 aa)) constitute an SCAN box domain. Glycyl lysine isopeptide (Lys-Gly) (interchain with G-Cter in SUMO2) cross-links involve residues lysine 215 and lysine 238. 5 consecutive C2H2-type zinc fingers follow at residues 254–276 (HKCD…QRIH), 282–304 (YECN…RGIH), 310–332 (YHCK…QRIH), 338–360 (YQCS…QRSH), and 366–388 (HQCI…QKIH).

Belongs to the krueppel C2H2-type zinc-finger protein family.

Its subcellular location is the nucleus. Functionally, may be involved in transcriptional regulation. The sequence is that of Zinc finger and SCAN domain-containing protein 9 (ZSCAN9) from Homo sapiens (Human).